A 281-amino-acid chain; its full sequence is 3-hydroxybutyryl-CoA dehydrogenase (281 aa).

The protein belongs to the 3-hydroxyacyl-CoA dehydrogenase family.

It catalyses the reaction (3S)-3-hydroxybutanoyl-CoA + NADP(+) = acetoacetyl-CoA + NADPH + H(+). Its pathway is lipid metabolism; butanoate metabolism. The protein is 3-hydroxybutyryl-CoA dehydrogenase (hbd) of Clostridioides difficile (Peptoclostridium difficile).